The sequence spans 47 residues: Packaging protein P22 (47 aa).

Residues 22–42 (TGWLAFVGLIIVAIILWQQII) form a helical membrane-spanning segment.

In terms of assembly, heterodimer of P20 and P22; further multimerizes as hexamers of heterodimers. Part of the dodecameric portal complex that is composed of the packaging efficiency factor P6, the DNA packaging ATPase P9, and the internal heterododecamer P20/P22 which spans the virion inner membrane.

It is found in the virion membrane. Together with P22, forms the internal part of the portal complex embeded in the virion internal membrane and which plays critical roles in genome packaging and genome ejection. Both proteins multimerize as a single ring-shaped heterdodecamer arranged around a central channel and interact with the P6/P9 external part of the portal. This Enterobacteria phage PRD1 (Bacteriophage PRD1) protein is Packaging protein P22 (XXII).